The sequence spans 323 residues: Putative divalent cation/proton antiporter TMEM165 (323 aa).

Residues 1–33 form the signal peptide; sequence MAASARGSGRAPTRRLLVLLLLPLLWAPAGVRA. Over 34–88 the chain is Lumenal; the sequence is GPEEDLSHRNQEPPAPAQQLQPQPAAVQGLEPARAEKGFTPAAPVHTNREDAATQ. The segment covering 35–44 has biased composition (basic and acidic residues); that stretch reads PEEDLSHRNQ. The segment at 35–60 is disordered; that stretch reads PEEDLSHRNQEPPAPAQQLQPQPAAV. Residues 50–59 are compositionally biased toward low complexity; sequence AQQLQPQPAA. A helical membrane pass occupies residues 89-109; it reads ANLGFIHAFVAAISVIIVSEL. Residues 110–126 lie on the Cytoplasmic side of the membrane; sequence GDKTFFIAAIMAMRYNR. Residues 127 to 147 traverse the membrane as a helical segment; that stretch reads LTVLAGAMLALALMTCLSVLF. Over 148–151 the chain is Lumenal; the sequence is GYAT. A helical membrane pass occupies residues 152–172; it reads TVIPRVYTYYVSTALFAIFGI. The Cytoplasmic segment spans residues 173-227; sequence RMLREGLKMSPDEGQEELEEVQAELKKKDEEFQRTKLLNGPDVETGTSTAIPQKK. Residues 184–211 adopt a coiled-coil conformation; it reads DEGQEELEEVQAELKKKDEEFQRTKLLN. The helical transmembrane segment at 228 to 248 threads the bilayer; sequence WLHFISPIFVQALTLTFLAEW. Over 249-266 the chain is Lumenal; sequence GDRSQLTTIVLAAREDPY. A helical transmembrane segment spans residues 267–287; the sequence is GVAVGGTVGHCLCTGLAVIGG. Residues 288–298 lie on the Cytoplasmic side of the membrane; that stretch reads RMIAQKISVRT. A helical membrane pass occupies residues 299-319; that stretch reads VTIIGGIVFLAFAFSALFISP. The Lumenal portion of the chain corresponds to 320–323; sequence ESGF.

It belongs to the GDT1 family.

It is found in the golgi apparatus membrane. It carries out the reaction Ca(2+)(in) + n H(+)(out) = Ca(2+)(out) + n H(+)(in). The catalysed reaction is Mn(2+)(in) + n H(+)(out) = Mn(2+)(out) + n H(+)(in). Its function is as follows. Putative divalent cation:proton antiporter that exchanges calcium or manganese ions for protons across the Golgi membrane. Mediates the reversible transport of calcium or manganese to the Golgi lumen driven by the proton gradient and possibly the membrane potential generated by V-ATPase. Provides calcium or manganese cofactors to resident Golgi enzymes and contributes to the maintenance of an acidic luminal Golgi pH required for proper functioning of the secretory pathway. Promotes Ca(2+) storage within the Golgi lumen of the mammary epithelial cells to be then secreted into milk. The transport mechanism and stoichiometry remains to be elucidated. This is Putative divalent cation/proton antiporter TMEM165 from Rattus norvegicus (Rat).